The sequence spans 537 residues: DELLA protein GAI (537 aa).

The interval 1–33 (MKRDHQEISGSGSNPAESSSIKGKLWEEDPDAG) is disordered. Over residues 9–20 (SGSGSNPAESSS) the composition is skewed to low complexity. The short motif at 37–41 (DELLA) is the DELLA motif element. Residues 131–157 (KSDPGLEITRKRAKTESSSSSSSTTTR) form a disordered region. Residues 147–156 (SSSSSSSTTT) show a composition bias toward low complexity. The GRAS domain occupies 162–533 (IDSQEAGVRL…RPLIAHLGLA (372 aa)). The segment at 169-223 (VRLVHTLMACAEAVQQDNLKLADALVKHIGLLASSQTGAMRKVATYFAEALARRI) is leucine repeat I (LRI). The tract at residues 241–306 (QIPFYETCPY…GGPPAFRLTG (66 aa)) is VHIID. The short motif at 272–276 (VHVID) is the VHIID element. Residues 320-352 (QVGWKLAQLAERIGIEFEFRGFVANSLADLEPE) are leucine repeat II (LRII). Residues 364-454 (VAVNAVFELH…ELYLGRQICN (91 aa)) form a PFYRE region. Residues 372 to 376 (LHPLL) carry the LXXLL motif motif. The SAW stretch occupies residues 457–533 (ACEGMDRVER…RPLIAHLGLA (77 aa)).

The protein belongs to the GRAS family. DELLA subfamily. Phosphorylated. Post-translationally, ubiquitinated. Upon GA application it is ubiquitinated, leading to its subsequent degradation.

The protein resides in the nucleus. In terms of biological role, probable transcriptional regulator that acts as a repressor of the gibberellin (GA) signaling pathway. Probably acts by participating in large multiprotein complexes that represses transcription of GA-inducible genes. Upon GA application, it is degraded by the proteasome, allowing the GA signaling pathway. This is DELLA protein GAI (GAI) from Gossypium hirsutum (Upland cotton).